The chain runs to 378 residues: Chaperone protein DnaJ (378 aa).

The 66-residue stretch at 5–70 (DFYEILGVSK…EKRSAYDRMG (66 aa)) folds into the J domain. The CR-type zinc-finger motif lies at 137 to 215 (GCKKEISFTA…CHGNGVKDKS (79 aa)). 8 residues coordinate Zn(2+): C150, C153, C167, C170, C189, C192, C203, and C206. CXXCXGXG motif repeat units follow at residues 150–157 (CDTCDGKG), 167–174 (CQTCHGQG), 189–196 (CPHCGGTG), and 203–210 (CSDCHGNG).

It belongs to the DnaJ family. Homodimer. Requires Zn(2+) as cofactor.

Its subcellular location is the cytoplasm. Participates actively in the response to hyperosmotic and heat shock by preventing the aggregation of stress-denatured proteins and by disaggregating proteins, also in an autonomous, DnaK-independent fashion. Unfolded proteins bind initially to DnaJ; upon interaction with the DnaJ-bound protein, DnaK hydrolyzes its bound ATP, resulting in the formation of a stable complex. GrpE releases ADP from DnaK; ATP binding to DnaK triggers the release of the substrate protein, thus completing the reaction cycle. Several rounds of ATP-dependent interactions between DnaJ, DnaK and GrpE are required for fully efficient folding. Also involved, together with DnaK and GrpE, in the DNA replication of plasmids through activation of initiation proteins. The protein is Chaperone protein DnaJ of Psychrobacter cryohalolentis (strain ATCC BAA-1226 / DSM 17306 / VKM B-2378 / K5).